A 341-amino-acid polypeptide reads, in one-letter code: GTP-binding protein REM 2 (341 aa).

Positions 1–13 are enriched in acidic residues; sequence MHTDLDTDMDMDT. Disordered regions lie at residues 1 to 71 and 84 to 106; these read MHTD…GSMP and VDEL…GSGE. Polar residues predominate over residues 18-30; sequence LCSSSSRQASPLG. Ser-27 carries the phosphoserine modification. Residues 90–106 are compositionally biased toward low complexity; that stretch reads PPQASPSGSSDSLGSGE. Residues 122 to 129, 230 to 233, and 261 to 262 contribute to the GTP site; these read GESGVGKS, NKSD, and AA. The segment at 282–309 is disordered; the sequence is RGRGHAGGQRPEPSSPDGPAPPTRRESL. A compositionally biased stretch (pro residues) spans 294–303; that stretch reads PSSPDGPAPP. Ser-296 bears the Phosphoserine mark.

The protein belongs to the small GTPase superfamily. RGK family.

The protein localises to the cell membrane. Functionally, binds GTP saturably and exhibits a low intrinsic rate of GTP hydrolysis. The sequence is that of GTP-binding protein REM 2 (Rem2) from Mus musculus (Mouse).